The following is a 153-amino-acid chain: Ribosomal RNA large subunit methyltransferase H (153 aa).

S-adenosyl-L-methionine is bound by residues leucine 70, glycine 102, and 121–126 (LSRMTF).

This sequence belongs to the RNA methyltransferase RlmH family. Homodimer.

Its subcellular location is the cytoplasm. It catalyses the reaction pseudouridine(1915) in 23S rRNA + S-adenosyl-L-methionine = N(3)-methylpseudouridine(1915) in 23S rRNA + S-adenosyl-L-homocysteine + H(+). Specifically methylates the pseudouridine at position 1915 (m3Psi1915) in 23S rRNA. This is Ribosomal RNA large subunit methyltransferase H from Geotalea daltonii (strain DSM 22248 / JCM 15807 / FRC-32) (Geobacter daltonii).